Here is a 118-residue protein sequence, read N- to C-terminus: Large ribosomal subunit protein bL19 (118 aa).

The protein belongs to the bacterial ribosomal protein bL19 family.

In terms of biological role, this protein is located at the 30S-50S ribosomal subunit interface and may play a role in the structure and function of the aminoacyl-tRNA binding site. The chain is Large ribosomal subunit protein bL19 from Marinobacter nauticus (strain ATCC 700491 / DSM 11845 / VT8) (Marinobacter aquaeolei).